We begin with the raw amino-acid sequence, 561 residues long: Putative transport protein CKO_02260 (561 aa).

The next 5 membrane-spanning stretches (helical) occupy residues Leu-8–Gly-28, Leu-32–Gln-52, Phe-66–Phe-86, Met-94–Phe-114, and Asn-158–Ala-178. RCK C-terminal domains follow at residues Arg-200–Asn-288 and Val-292–Phe-373. 5 helical membrane passes run Leu-383 to Phe-403, Phe-406 to Leu-426, Phe-447 to Gly-467, Met-475 to Ala-495, and Ala-540 to Leu-560.

This sequence belongs to the AAE transporter (TC 2.A.81) family. YbjL subfamily.

It localises to the cell membrane. The sequence is that of Putative transport protein CKO_02260 from Citrobacter koseri (strain ATCC BAA-895 / CDC 4225-83 / SGSC4696).